A 446-amino-acid chain; its full sequence is Phosphoglucosamine mutase (446 aa).

Ser88 functions as the Phosphoserine intermediate in the catalytic mechanism. Mg(2+) is bound by residues Ser88, Asp231, Asp233, and Asp235. A Phosphoserine modification is found at Ser88.

This sequence belongs to the phosphohexose mutase family. The cofactor is Mg(2+). In terms of processing, activated by phosphorylation.

It carries out the reaction alpha-D-glucosamine 1-phosphate = D-glucosamine 6-phosphate. In terms of biological role, catalyzes the conversion of glucosamine-6-phosphate to glucosamine-1-phosphate. This is Phosphoglucosamine mutase from Methanococcus vannielii (strain ATCC 35089 / DSM 1224 / JCM 13029 / OCM 148 / SB).